Here is a 241-residue protein sequence, read N- to C-terminus: Endodeoxyribonuclease NucC (241 aa).

Active-site residues include aspartate 73, glutamate 104, and lysine 106. Mg(2+)-binding residues include aspartate 73 and glutamate 104.

It belongs to the NucC endonuclease family. Self-oligomerizes. Forms homotrimers; in the presence of cAAA the trimers associate face-to-face to form homohexamers. The 2 cAAA-binding sites are on the exterior of the hexamer at the three-way junction, there are maximally 2 cyclic nucleotides per hexamer. Requires Mg(2+) as cofactor.

Activated by cAAA and to a lesser extent cAA and cAAG; cAAA and cAA are products of its cognate CD-NTase. Cyclic nucleotide binding causes hexamerization. Cyclic nucleotide binding causes a series of shifts that enclose the cAAA molecule, enable hexamer formation and juxtapose pairs of active sites to allow dsDNA cleavage. Functionally, effector DNase of a CBASS antivirus system. CBASS (cyclic oligonucleotide-based antiphage signaling system) provides immunity against bacteriophage. The CD-NTase protein synthesizes cyclic nucleotides in response to infection; these serve as specific second messenger signals. The signals activate a diverse range of effectors, leading to bacterial cell death and thus abortive phage infection. A type III-C(AAA) CBASS system. A cyclic nucleotide-activated dsDNase. In the presence of 3',3',3'-cyclic AMP-AMP-AMP (cAAA), and to a lesser extent 3',3',3'-cyclic AMP-AMP-GMP (cAAG) and cyclic-di-AMP (c-di-AMP), endonucleolytically degrades dsDNA. Binds one cAAA in a pocket on one surface of the trimer; cAAA binding promotes hexamerization, which is necessary for nuclease activation. Also binds c-diAMP or linear di-AMP with lower affinity. The nuclease digests dsDNA to about 50 bp lengths with a 2-base 3' overhang and a consensus recognition site of 5'-Axx|T-3'. DNA has been modeled to contact a pair of juxtaposed active sites (one from each layer of the hexamer), accounting for cleavage on both strands and the 2-base overhang. In terms of biological role, protects E.coli strain JP313 against bacteriophage lambda cI- infection. When the cdnC-cap7-cap6-nucC operon is transformed into a susceptible strain it confers bacteriophage immunity. Mutations in the sensor (Cap7 also called HORMA) or effector proteins (CdnC, NucC) but not the disassembly protein (Cap6 also called Trip13) no longer confer immunity. The presence of the intact operon leads to culture collapse and cell death which occurs before the phage has finished its replication cycle, thus protecting non-infected bacteria by aborting the phage infection and preventing its propagation. This Escherichia coli (strain MS 115-1) protein is Endodeoxyribonuclease NucC.